The chain runs to 422 residues: tRNA hydroxylation protein P (422 aa).

An N-terminal signal peptide occupies residues 1–58 (MNQVELLSPAGNLKKLKIALNYGADAVYGGVSHFSLRNRAGKEFTLETFKEGIDYAHA).

This sequence belongs to the peptidase U32 family.

Its function is as follows. Involved in prephenate-dependent formation of 5-hydroxyuridine (ho5U) modification at position 34 in tRNAs, the first step in 5-carboxymethoxyuridine (cmo5U) biosynthesis. This Helicobacter pylori (strain ATCC 700392 / 26695) (Campylobacter pylori) protein is tRNA hydroxylation protein P.